A 298-amino-acid polypeptide reads, in one-letter code: ATP synthase gamma chain (298 aa).

It belongs to the ATPase gamma chain family. In terms of assembly, F-type ATPases have 2 components, CF(1) - the catalytic core - and CF(0) - the membrane proton channel. CF(1) has five subunits: alpha(3), beta(3), gamma(1), delta(1), epsilon(1). CF(0) has three main subunits: a, b and c.

It localises to the cell inner membrane. In terms of biological role, produces ATP from ADP in the presence of a proton gradient across the membrane. The gamma chain is believed to be important in regulating ATPase activity and the flow of protons through the CF(0) complex. This chain is ATP synthase gamma chain, found in Granulibacter bethesdensis (strain ATCC BAA-1260 / CGDNIH1).